We begin with the raw amino-acid sequence, 573 residues long: MGEGEENGNEADSNERSLALSPTWSVAIVLTVFVVVSLIVERSIYRLSTWLRKTKRKPMFAALEKMKEELMLLGFISLLLTATSSTIANICVPSSFYNDRFLPCTRSEIQEELESGSTVKRNLLTKSLFFNIFRRRLDVIKRTTCSEGHEPFVSYEGLEQLHRFIFIMAVTHVTYSCLTMLLAIVKIHSWRIWEDVARLDRHDCLTAVAREKIFRRQTTFVQYHTSAPLAKNRILIWVTCFFRQFGRSVDRSDYLTLRKGFIVNHHLTLKYDFHSYMIRSMEEEFQRIVGVSGPLWGFVVAFMLFNIKGSNLYFWIAIIPVTLVLLVGAKLQHVIATLALENAGLTEYPSGVKLRPRDELFWFNKPELLLSLIHFILFQNSFELASFFWFWWQFGYSSCFLKNHYLVYFRLLLGFAGQFLCSYSTLPLYALVTQMGTNYKAALIPQRIRETIRGWGKATRRKRRHGLYGDDSTVRTETSTIASLEEYDHQVLDVTETSFEQQRKQQEQGTTELELQPIQPRNDCVPNDTSSRVGTPLLRPWLSISSPTTTIELRSEPMETLSRSSSLPSEKRV.

At 1-19 (MGEGEENGNEADSNERSLA) the chain is on the extracellular side. A helical membrane pass occupies residues 20-40 (LSPTWSVAIVLTVFVVVSLIV). The Cytoplasmic segment spans residues 41–69 (ERSIYRLSTWLRKTKRKPMFAALEKMKEE). A helical transmembrane segment spans residues 70–90 (LMLLGFISLLLTATSSTIANI). The Extracellular segment spans residues 91–163 (CVPSSFYNDR…SYEGLEQLHR (73 aa)). The chain crosses the membrane as a helical span at residues 164–184 (FIFIMAVTHVTYSCLTMLLAI). Over 185–287 (VKIHSWRIWE…IRSMEEEFQR (103 aa)) the chain is Cytoplasmic. Helical transmembrane passes span 288 to 308 (IVGV…FNIK) and 309 to 329 (GSNL…LVGA). Topologically, residues 330–371 (KLQHVIATLALENAGLTEYPSGVKLRPRDELFWFNKPELLLS) are cytoplasmic. Residues 372-392 (LIHFILFQNSFELASFFWFWW) form a helical membrane-spanning segment. Residues 393–411 (QFGYSSCFLKNHYLVYFRL) are Extracellular-facing. A helical transmembrane segment spans residues 412–432 (LLGFAGQFLCSYSTLPLYALV). At 433-573 (TQMGTNYKAA…SSSLPSEKRV (141 aa)) the chain is on the cytoplasmic side. Positions 446 to 467 (QRIRETIRGWGKATRRKRRHGL) are calmodulin-binding. 2 disordered regions span residues 500–532 (EQQR…TSSR) and 554–573 (RSEP…EKRV). Positions 507–516 (EQGTTELELQ) are enriched in low complexity. Residues 561 to 573 (LSRSSSLPSEKRV) are compositionally biased toward polar residues.

Belongs to the MLO family.

It localises to the membrane. Functionally, may be involved in modulation of pathogen defense and leaf cell death. Activity seems to be regulated by Ca(2+)-dependent calmodulin binding and seems not to require heterotrimeric G proteins. The chain is MLO-like protein 11 (MLO11) from Arabidopsis thaliana (Mouse-ear cress).